The sequence spans 98 residues: NADH-ubiquinone oxidoreductase chain 4L (98 aa).

3 helical membrane-spanning segments follow: residues 1–21 (MSMV…GLLV), 29–49 (SLLC…MAIL), and 61–81 (IILL…LVMV).

This sequence belongs to the complex I subunit 4L family. In terms of assembly, core subunit of respiratory chain NADH dehydrogenase (Complex I) which is composed of 45 different subunits.

It is found in the mitochondrion inner membrane. It catalyses the reaction a ubiquinone + NADH + 5 H(+)(in) = a ubiquinol + NAD(+) + 4 H(+)(out). Its function is as follows. Core subunit of the mitochondrial membrane respiratory chain NADH dehydrogenase (Complex I) which catalyzes electron transfer from NADH through the respiratory chain, using ubiquinone as an electron acceptor. Part of the enzyme membrane arm which is embedded in the lipid bilayer and involved in proton translocation. The protein is NADH-ubiquinone oxidoreductase chain 4L (MT-ND4L) of Lynx canadensis (Canada lynx).